A 550-amino-acid chain; its full sequence is Chaperonin GroEL (550 aa).

Residues 30–33, lysine 51, 87–91, glycine 415, 481–483, and aspartate 497 contribute to the ATP site; these read TLGP, DGTTT, and NAA.

The protein belongs to the chaperonin (HSP60) family. In terms of assembly, forms a cylinder of 14 subunits composed of two heptameric rings stacked back-to-back. Interacts with the co-chaperonin GroES.

The protein localises to the cytoplasm. It carries out the reaction ATP + H2O + a folded polypeptide = ADP + phosphate + an unfolded polypeptide.. Its function is as follows. Together with its co-chaperonin GroES, plays an essential role in assisting protein folding. The GroEL-GroES system forms a nano-cage that allows encapsulation of the non-native substrate proteins and provides a physical environment optimized to promote and accelerate protein folding. This Photobacterium profundum (strain SS9) protein is Chaperonin GroEL.